The primary structure comprises 202 residues: MKAGVLALQGDVEEHIQAFRKAAQELGRSVEVVQVKRPQDLREIAVLAIPGGESTTIGALARRTGLLDALRDAIKGGLPTLGTCAGAIFLAKEVRDSVVGETKQPILGLMDIAVVRNAFGRQRESFEVDLREEGIGALKAVFIRAPAFTKAWGSARLAAPLKHPELGQIYAAAFQGHMVATAFHPELSTTAVHRYMLNLAKT.

An L-glutamine-binding site is contributed by 52–54; it reads GES. Cys84 serves as the catalytic Nucleophile. L-glutamine-binding positions include Arg116 and 143-144; that span reads IR. Residues His184 and Glu186 each act as charge relay system in the active site.

Belongs to the glutaminase PdxT/SNO family. As to quaternary structure, in the presence of PdxS, forms a dodecamer of heterodimers. Only shows activity in the heterodimer.

It carries out the reaction aldehydo-D-ribose 5-phosphate + D-glyceraldehyde 3-phosphate + L-glutamine = pyridoxal 5'-phosphate + L-glutamate + phosphate + 3 H2O + H(+). It catalyses the reaction L-glutamine + H2O = L-glutamate + NH4(+). It participates in cofactor biosynthesis; pyridoxal 5'-phosphate biosynthesis. Its function is as follows. Catalyzes the hydrolysis of glutamine to glutamate and ammonia as part of the biosynthesis of pyridoxal 5'-phosphate. The resulting ammonia molecule is channeled to the active site of PdxS. The sequence is that of Pyridoxal 5'-phosphate synthase subunit PdxT from Pyrobaculum neutrophilum (strain DSM 2338 / JCM 9278 / NBRC 100436 / V24Sta) (Thermoproteus neutrophilus).